A 476-amino-acid chain; its full sequence is ATP synthase subunit beta (476 aa).

158-165 (GGAGVGKT) is a binding site for ATP.

The protein belongs to the ATPase alpha/beta chains family. F-type ATPases have 2 components, CF(1) - the catalytic core - and CF(0) - the membrane proton channel. CF(1) has five subunits: alpha(3), beta(3), gamma(1), delta(1), epsilon(1). CF(0) has three main subunits: a(1), b(2) and c(9-12). The alpha and beta chains form an alternating ring which encloses part of the gamma chain. CF(1) is attached to CF(0) by a central stalk formed by the gamma and epsilon chains, while a peripheral stalk is formed by the delta and b chains.

Its subcellular location is the cell inner membrane. The catalysed reaction is ATP + H2O + 4 H(+)(in) = ADP + phosphate + 5 H(+)(out). In terms of biological role, produces ATP from ADP in the presence of a proton gradient across the membrane. The catalytic sites are hosted primarily by the beta subunits. The polypeptide is ATP synthase subunit beta (Paracidovorax citrulli (strain AAC00-1) (Acidovorax citrulli)).